A 381-amino-acid polypeptide reads, in one-letter code: Sulfate adenylyltransferase (381 aa).

It belongs to the sulfate adenylyltransferase family.

The catalysed reaction is sulfate + ATP + H(+) = adenosine 5'-phosphosulfate + diphosphate. It functions in the pathway sulfur metabolism; hydrogen sulfide biosynthesis; sulfite from sulfate: step 1/3. The sequence is that of Sulfate adenylyltransferase from Carboxydothermus hydrogenoformans (strain ATCC BAA-161 / DSM 6008 / Z-2901).